The sequence spans 114 residues: Large ribosomal subunit protein bL20 (114 aa).

Belongs to the bacterial ribosomal protein bL20 family.

Functionally, binds directly to 23S ribosomal RNA and is necessary for the in vitro assembly process of the 50S ribosomal subunit. It is not involved in the protein synthesizing functions of that subunit. This is Large ribosomal subunit protein bL20 from Anaeromyxobacter dehalogenans (strain 2CP-C).